The sequence spans 310 residues: Homoserine kinase (310 aa).

Position 91–101 (91–101) interacts with ATP; the sequence is PIGSGLGSSAC.

It belongs to the GHMP kinase family. Homoserine kinase subfamily.

The protein localises to the cytoplasm. It catalyses the reaction L-homoserine + ATP = O-phospho-L-homoserine + ADP + H(+). It participates in amino-acid biosynthesis; L-threonine biosynthesis; L-threonine from L-aspartate: step 4/5. In terms of biological role, catalyzes the ATP-dependent phosphorylation of L-homoserine to L-homoserine phosphate. The chain is Homoserine kinase from Shigella flexneri serotype 5b (strain 8401).